The chain runs to 743 residues: Keratin, type I cytoskeletal 9 (743 aa).

A compositionally biased stretch (low complexity) spans Met1–Ser16. Positions Met1–Gly46 are disordered. Residues Met1 to Asn130 are head. A phosphoserine mark is found at Ser14 and Ser16. Residues Cys17–Gly28 show a composition bias toward gly residues. Over residues Ser29–Arg39 the composition is skewed to low complexity. Phosphoserine occurs at positions 55 and 155. A coil 1A region spans residues Glu131–Trp166. The 313-residue stretch at Glu131–Phe443 folds into the IF rod domain. The segment at Tyr167 to Thr185 is linker 1. A coil 1B region spans residues Ile186–Leu277. The tract at residues Thr278–Val300 is linker 12. Residues Leu301 to Gly439 are coil 2. Disordered regions lie at residues Gln440 to Gly468 and Gly501 to Tyr743. Positions Gln440–Ser709 are tail. Composition is skewed to gly residues over residues Gly449–Gly468 and Gly501–Asn717.

It belongs to the intermediate filament family. In terms of assembly, heterotetramer of two type I and two type II keratins. As to expression, expressed in footpad epidermis and testis (at protein level).

In terms of biological role, may serve an important special function either in the mature palmar and plantar skin tissue or in the morphogenetic program of the formation of these tissues. Plays a role in keratin filament assembly. Plays an essential role in the correct development of sperm. This Mus musculus (Mouse) protein is Keratin, type I cytoskeletal 9.